The sequence spans 318 residues: NADH-ubiquinone oxidoreductase chain 1 (318 aa).

The next 8 helical transmembrane spans lie at 2-22 (LLTNILCLMMPILLAVAFLTL), 69-89 (LMFIIAPTLAFTLALSLWAPL), 102-122 (ILFILAMSSLAVHSILWSGWA), 147-167 (AIILLSIMLINGSFTLSTLTI), 172-192 (MWLILPTWPLAMMWFISTLAE), 231-251 (IILMNALTATLFFGAFHNPLF), 253-273 (ELHTINLTTKTLILVFLFLWI), and 294-314 (LPLTLALCTWHMTMPISLAGI).

It belongs to the complex I subunit 1 family.

Its subcellular location is the mitochondrion inner membrane. It catalyses the reaction a ubiquinone + NADH + 5 H(+)(in) = a ubiquinol + NAD(+) + 4 H(+)(out). In terms of biological role, core subunit of the mitochondrial membrane respiratory chain NADH dehydrogenase (Complex I) that is believed to belong to the minimal assembly required for catalysis. Complex I functions in the transfer of electrons from NADH to the respiratory chain. The immediate electron acceptor for the enzyme is believed to be ubiquinone. This is NADH-ubiquinone oxidoreductase chain 1 (MT-ND1) from Bradypus variegatus (Brown-throated three-fingered sloth).